Here is a 155-residue protein sequence, read N- to C-terminus: Small ribosomal subunit protein uS7c (155 aa).

The protein belongs to the universal ribosomal protein uS7 family. Part of the 30S ribosomal subunit.

Its subcellular location is the plastid. It localises to the chloroplast. In terms of biological role, one of the primary rRNA binding proteins, it binds directly to 16S rRNA where it nucleates assembly of the head domain of the 30S subunit. The sequence is that of Small ribosomal subunit protein uS7c (rps7) from Sagittaria latifolia (Broadleaf arrowhead).